Reading from the N-terminus, the 416-residue chain is Enterobactin exporter EntS (416 aa).

Residues 1 to 21 (MNKQSWLLNLSLLKTHPAFRA) are Cytoplasmic-facing. A helical membrane pass occupies residues 22–42 (VFLARFISIVSLGLLGVAVPV). The Periplasmic portion of the chain corresponds to 43 to 55 (QIQMMTHSTWQVG). Residues 56–76 (LSVTLTGGAMFVGLMVGGVLA) traverse the membrane as a helical segment. The Cytoplasmic portion of the chain corresponds to 77–83 (DRYERKK). A helical transmembrane segment spans residues 84-104 (VILLARGTCGIGFIGLCLNAL). Topologically, residues 105 to 109 (LPEPS) are periplasmic. The helical transmembrane segment at 110–130 (LLAIYLLGLWDGFFASLGVTA) threads the bilayer. Topologically, residues 131-156 (LLAATPALVGRENLMQAGAITMLTVR) are cytoplasmic. The helical transmembrane segment at 157-177 (LGSVISPMIGGLLLATGGVAW) threads the bilayer. Asn178 is a topological domain (periplasmic). A helical transmembrane segment spans residues 179 to 199 (YGLAAAGTFITLLPLLSLPAL). Topologically, residues 200-218 (PPPPQPREHPLKSLLAGFR) are cytoplasmic. A helical transmembrane segment spans residues 219-239 (FLLASPLVGGIALLGGLLTMA). Residues 240-256 (SAVRVLYPALADNWQMS) lie on the Periplasmic side of the membrane. Residues 257 to 277 (AAQIGFLYAAIPLGAAIGALT) form a helical membrane-spanning segment. Topologically, residues 278–287 (SGKLAHSARP) are cytoplasmic. The helical transmembrane segment at 288-307 (GLLMLLSTLGSFLAIGLFGL) threads the bilayer. The Periplasmic segment spans residues 308–313 (MPMWIL). The chain crosses the membrane as a helical span at residues 314–336 (GVVCLALFGWLSAVSSLLQYTML). Residues 337 to 356 (QTQTPEAMLGRINGLWTAQN) lie on the Cytoplasmic side of the membrane. The chain crosses the membrane as a helical span at residues 357–377 (VTGDAIGAALLGGLGAMMTPV). Position 378 (Ala378) is a topological domain, periplasmic. The helical transmembrane segment at 379–399 (SASASGFGLLIIGVLLLLVLV) threads the bilayer. Residues 400–416 (ELRRFRQTPPQVTASDG) lie on the Cytoplasmic side of the membrane.

This sequence belongs to the major facilitator superfamily. EntS (TC 2.A.1.38) family.

The protein resides in the cell inner membrane. Functionally, component of an export pathway for enterobactin. The polypeptide is Enterobactin exporter EntS (Escherichia coli O157:H7).